Here is a 404-residue protein sequence, read N- to C-terminus: Translation initiation factor eIF2B subunit gamma (404 aa).

It belongs to the eIF-2B gamma/epsilon subunits family. In terms of assembly, component of the translation initiation factor 2B (eIF2B) complex which is a heterodecamer of two sets of five different subunits: alpha, beta, gamma, delta and epsilon. Subunits alpha, beta and delta comprise a regulatory subcomplex and subunits epsilon and gamma comprise a catalytic subcomplex. Within the complex, the hexameric regulatory complex resides at the center, with the two heterodimeric catalytic subcomplexes bound on opposite sides.

The protein localises to the cytoplasm. It is found in the cytosol. Acts as a component of the translation initiation factor 2B (eIF2B) complex, which catalyzes the exchange of GDP for GTP on the eukaryotic initiation factor 2 (eIF2) complex gamma subunit. Its guanine nucleotide exchange factor activity is repressed when bound to eIF2 complex phosphorylated on the alpha subunit, thereby limiting the amount of methionyl-initiator methionine tRNA available to the ribosome and consequently global translation is repressed. The protein is Translation initiation factor eIF2B subunit gamma of Caenorhabditis elegans.